Consider the following 214-residue polypeptide: Probable nicotinate-nucleotide adenylyltransferase (214 aa).

The protein belongs to the NadD family.

It carries out the reaction nicotinate beta-D-ribonucleotide + ATP + H(+) = deamido-NAD(+) + diphosphate. It participates in cofactor biosynthesis; NAD(+) biosynthesis; deamido-NAD(+) from nicotinate D-ribonucleotide: step 1/1. Catalyzes the reversible adenylation of nicotinate mononucleotide (NaMN) to nicotinic acid adenine dinucleotide (NaAD). The polypeptide is Probable nicotinate-nucleotide adenylyltransferase (Mycobacterium tuberculosis (strain ATCC 25177 / H37Ra)).